The following is a 671-amino-acid chain: Solute carrier family 53 member 1 (671 aa).

Positions 1–193 are important for promoting lysosomal/autophagosomal degradation of PXo bodies following inorganic phosphate (Pi) starvation; sequence MKFAEHLTAH…DIDRLIQETE (193 aa). Topologically, residues 1-228 are cytoplasmic; that stretch reads MKFAEHLTAH…EQQSPWTTFK (228 aa). The SPX domain maps to 2–218; it reads KFAEHLTAHI…MKRLRVPPLG (217 aa). An important for inositol polyphosphate binding region spans residues 152–159; sequence KILKKHDK. Residues 229-253 form a helical membrane-spanning segment; sequence VGLFSGAFVVLFITVVIAAMFYGFG. The Extracellular segment spans residues 254 to 255; sequence EN. A helical membrane pass occupies residues 256–287; that stretch reads WRAGMRMFRAPFLIIECLFLWGVNVYGWRSSG. Residues 288–300 lie on the Cytoplasmic side of the membrane; it reads VNHVLIFELDPRN. Residues 301–328 traverse the membrane as a helical segment; the sequence is HLSEQNIMEVASVFGVIWACCVLSYIFC. Topologically, residues 329–334 are extracellular; that stretch reads DPLGIP. The chain crosses the membrane as a helical span at residues 335 to 356; that stretch reads QYAAPLCLYTLMAAFLLNPTKT. The segment at residues 357–374 is an intramembrane region (helical); the sequence is FHHEARFWAIRILIRVIM. Residues 375 to 379 are Cytoplasmic-facing; sequence APFCF. The chain crosses the membrane as a discontinuously helical span at residues 380 to 413; it reads VNFADFWLADQLNSMVPAFLDIPFLICFFGRSPT. Positions 389 and 392 each coordinate phosphate. Over 414 to 415 the chain is Extracellular; that stretch reads WH. The discontinuously helical transmembrane segment at 416–455 threads the bilayer; the sequence is KAGKAASHCVEYVSLLHPIVAIMPAYFRFAQCIRRYRDTK. The EXS domain occupies 423–627; the sequence is HCVEYVSLLH…DCSDQTTILR (205 aa). A topological domain (cytoplasmic) is located at residue E456. The chain crosses the membrane as a helical span at residues 457 to 488; it reads SFPHLVNAAKYATSFFVVIFAHKYHTTTDTYP. Phosphate contacts are provided by K466 and Y467. Topologically, residues 489–491 are extracellular; it reads LSK. A helical membrane pass occupies residues 492 to 519; that stretch reads ENPWFYCWITAAIFSSCYAYTWDIKMDW. At 520 to 538 the chain is on the cytoplasmic side; sequence GLFDSKAGDNRFLREEIVY. Residues 539–570 form a discontinuously helical membrane-spanning segment; it reads SSTWFYYFGIIEDLILRFSWTLSMSLIEAGYI. Phosphate contacts are provided by R555, R586, and R587. A helical transmembrane segment spans residues 571–609; that stretch reads EGDVMMTILSPLEVFRRFIWNYFRLENEHLNNVGKFRAV. The Cytoplasmic portion of the chain corresponds to 610–671; that stretch reads RDISVAPMDC…QGESIEDLCS (62 aa).

This sequence belongs to the SYG1 (TC 2.A.94) family. As to quaternary structure, homodimer. Interacts with the FAR/SIN/STRIPAK complex members Cka and Pp2A-29B. As to expression, detected in PXo bodies found in the enterocytes and progenitors of the midgut and in the hindgut, but rarely occur in the Malpighian tubules, crop, brain, muscles and germlines (at protein level).

The protein resides in the membrane. The enzyme catalyses phosphate(in) = phosphate(out). In terms of biological role, inorganic ion transporter that mediates phosphate ion export across the cell membrane. Plays a major role in phosphate homeostasis, preventing intracellular phosphate accumulation and possible calcium phosphate precipitation, ultimately preserving calcium signaling. Binds inositol hexakisphosphate (Ins6P) and similar inositol polyphosphates, such as 5-diphospho-inositol pentakisphosphate (5-InsP7), which are important intracellular signaling molecules involved in regulation of phosphate flux. In enterocytes and differentiating progenitors of the gut, promotes the biogenesis and maintenance of organelles called PXo bodies that store intracellular inorganic phosphate (Pi), and also regulates Cka-JNK mediated tissue homeostasis in response to Pi availability in these tissues. Under conditions of adequate Pi, transports Pi into PXo bodies which convert and store the Pi in the form of phospholipids. It also inhibits Cka at the post-transcriptional level to prevent Cka-bsk/JNK mediated cell proliferation. Upon Pi starvation, Pxo expression is down-regulated resulting in the PXo bodies decreasing in phospholipid content until they undergo lysosomal/autophagosomal degradation and release the stored Pi back into the cytosol for use by the cell. Decrease in Pxo expression also activates the Cka protein, which moves to the nucleus to activate bsk/JNK which then induces nearby progenitor cells to proliferate and form new absorptive cells, probably helping the organism to cope with the nutrient deficiency by maximizing absorption of dietary Pi. This Drosophila melanogaster (Fruit fly) protein is Solute carrier family 53 member 1.